The chain runs to 234 residues: Gem-associated protein 8 (234 aa).

The disordered stretch occupies residues 60-116 (LAQSPAAKGGTSPKSRSKSPSASGDACRRRSRPGKPGPQRRSTEKPARFAEDNDSES). Residues 67-83 (KGGTSPKSRSKSPSASG) show a composition bias toward low complexity. Basic and acidic residues predominate over residues 100–110 (RSTEKPARFAE). Positions 130-153 (ITDELRQYFAETEQHREELRRQHQ) form a coiled coil.

In terms of assembly, part of the core SMN complex that contains SMN1, GEMIN2/SIP1, DDX20/GEMIN3, GEMIN4, GEMIN5, GEMIN6, GEMIN7, GEMIN8 and STRAP/UNRIP. Part of the SMN-Sm complex that contains SMN1, GEMIN2/SIP1, DDX20/GEMIN3, GEMIN4, GEMIN5, GEMIN6, GEMIN7, GEMIN8, STRAP/UNRIP and the Sm proteins SNRPB, SNRPD1, SNRPD2, SNRPD3, SNRPE, SNRPF and SNRPG. Interacts with GEMIN6; the interaction is direct. Interacts with GEMIN7; the interaction is direct. Interacts with SMN1; the interaction is direct. Interacts with GEMIN4; the interaction is direct.

The protein localises to the nucleus. It is found in the gem. The protein resides in the cytoplasm. Functionally, the SMN complex catalyzes the assembly of small nuclear ribonucleoproteins (snRNPs), the building blocks of the spliceosome, and thereby plays an important role in the splicing of cellular pre-mRNAs. Most spliceosomal snRNPs contain a common set of Sm proteins SNRPB, SNRPD1, SNRPD2, SNRPD3, SNRPE, SNRPF and SNRPG that assemble in a heptameric protein ring on the Sm site of the small nuclear RNA to form the core snRNP (Sm core). In the cytosol, the Sm proteins SNRPD1, SNRPD2, SNRPE, SNRPF and SNRPG are trapped in an inactive 6S pICln-Sm complex by the chaperone CLNS1A that controls the assembly of the core snRNP. To assemble core snRNPs, the SMN complex accepts the trapped 5Sm proteins from CLNS1A forming an intermediate. Binding of snRNA inside 5Sm triggers eviction of the SMN complex, thereby allowing binding of SNRPD3 and SNRPB to complete assembly of the core snRNP. The protein is Gem-associated protein 8 (GEMIN8) of Bos taurus (Bovine).